Here is a 103-residue protein sequence, read N- to C-terminus: UPF0145 protein BC_5181 (103 aa).

Belongs to the UPF0145 family.

This is UPF0145 protein BC_5181 from Bacillus cereus (strain ATCC 14579 / DSM 31 / CCUG 7414 / JCM 2152 / NBRC 15305 / NCIMB 9373 / NCTC 2599 / NRRL B-3711).